The primary structure comprises 380 residues: Cytochrome b (380 aa).

4 helical membrane-spanning segments follow: residues 34–54 (FGSLLGICLMTQILTGLLLAM), 78–99 (WLIRNLHANGASFFFICIYLHI), 114–134 (WNTGVILLLTLMATAFVGYVL), and 179–199 (FFALHFLLPFMIAGLTLVHLT). Residues His-84 and His-98 each coordinate heme b. His-183 and His-197 together coordinate heme b. His-202 serves as a coordination point for a ubiquinone. 4 helical membrane passes run 227–247 (LKDILGFTLMLLPLTTLALFS), 289–309 (LGGVLALAASVLILFLAPFLH), 321–341 (LSQLLFWILVANLFILTWVGS), and 348–368 (FIIIGQLASFTYFTILLILFP).

Belongs to the cytochrome b family. As to quaternary structure, the cytochrome bc1 complex contains 11 subunits: 3 respiratory subunits (MT-CYB, CYC1 and UQCRFS1), 2 core proteins (UQCRC1 and UQCRC2) and 6 low-molecular weight proteins (UQCRH/QCR6, UQCRB/QCR7, UQCRQ/QCR8, UQCR10/QCR9, UQCR11/QCR10 and a cleavage product of UQCRFS1). This cytochrome bc1 complex then forms a dimer. Heme b serves as cofactor.

It is found in the mitochondrion inner membrane. Functionally, component of the ubiquinol-cytochrome c reductase complex (complex III or cytochrome b-c1 complex) that is part of the mitochondrial respiratory chain. The b-c1 complex mediates electron transfer from ubiquinol to cytochrome c. Contributes to the generation of a proton gradient across the mitochondrial membrane that is then used for ATP synthesis. The polypeptide is Cytochrome b (MT-CYB) (Procellaria parkinsoni (Black petrel)).